The chain runs to 323 residues: Beta-ketoacyl-[acyl-carrier-protein] synthase III 1 (323 aa).

Residues Cys-114 and His-254 contribute to the active site. Positions 255–259 are ACP-binding; sequence QANLR. Residue Asn-284 is part of the active site.

It belongs to the thiolase-like superfamily. FabH family. Homodimer.

The protein resides in the cytoplasm. The enzyme catalyses malonyl-[ACP] + acetyl-CoA + H(+) = 3-oxobutanoyl-[ACP] + CO2 + CoA. It functions in the pathway lipid metabolism; fatty acid biosynthesis. In terms of biological role, catalyzes the condensation reaction of fatty acid synthesis by the addition to an acyl acceptor of two carbons from malonyl-ACP. Catalyzes the first condensation reaction which initiates fatty acid synthesis and may therefore play a role in governing the total rate of fatty acid production. Possesses both acetoacetyl-ACP synthase and acetyl transacylase activities. Its substrate specificity determines the biosynthesis of branched-chain and/or straight-chain of fatty acids. The polypeptide is Beta-ketoacyl-[acyl-carrier-protein] synthase III 1 (Lactiplantibacillus plantarum (strain ATCC BAA-793 / NCIMB 8826 / WCFS1) (Lactobacillus plantarum)).